Reading from the N-terminus, the 326-residue chain is Ribosomal large subunit pseudouridine synthase D (326 aa).

Residues 18–91 (QRLDQALAEM…IPLDIVYEDE (74 aa)) form the S4 RNA-binding domain. Asp139 is an active-site residue.

It belongs to the pseudouridine synthase RluA family.

The protein resides in the cytoplasm. It catalyses the reaction uridine(1911/1915/1917) in 23S rRNA = pseudouridine(1911/1915/1917) in 23S rRNA. In terms of biological role, responsible for synthesis of pseudouridine from uracil at positions 1911, 1915 and 1917 in 23S ribosomal RNA. This Shigella flexneri protein is Ribosomal large subunit pseudouridine synthase D (rluD).